The primary structure comprises 303 residues: MDLDQWISKVKDGQHLSEDELQLLCEYVKEILIEESNVQPVNSPVTVCGDIHGQFHDLMKLFQTGGHVPETNYIFMGDFVDRGYNSLEVFTILLLLKARHPANITLLRGNHESRQLTQVYGFYDECQRKYGNANAWRYCTDVFDYLTLSAIIDGTVLCVHGGLSPDVRTIDQIRLIERNCEIPHEGPFCDLMWSDPEDIETWAVSPRGAGWLFGSRVTTEFNHINNLDLVCRAHQLVQEGLKYMFQDKGLVTVWSAPNYCYRCGNVASILSFNDNMEREVKFFTETEENNQMRGPRTGVPYFL.

Residues D50, H52, D78, and N110 each coordinate Zn(2+). H111 (proton donor) is an active-site residue. 2 residues coordinate Zn(2+): H160 and H234.

Belongs to the PPP phosphatase family. PP-6 (PP-V) subfamily. Interacts with PHYA and PHYB, mostly when they are phosphorylated and in Pfr forms. Interacts with TAP46. Interacts with PIN1 and PIN2. Interacts with ABI5. Interacts with PIF3 and PIF4. Protein phosphatase 6 (PP6) holoenzyme is a heterotrimeric complex formed by the catalytic subunit FYPP, a SAPS domain-containing subunit (SAL) and a protein phosphatase 2A regulatory subunit A (PP2AA). Zn(2+) serves as cofactor. Mostly expressed in flowers. Also detected to a lower extent in stems and leaves. Expressed in roots.

It localises to the cytoplasm. It catalyses the reaction O-phospho-L-seryl-[protein] + H2O = L-seryl-[protein] + phosphate. The enzyme catalyses O-phospho-L-threonyl-[protein] + H2O = L-threonyl-[protein] + phosphate. Its function is as follows. Catalytic subunit of protein phosphatase 6 (PP6). Dephosphorylates phosphorylated phytochromes, with a preference toward Pfr forms. Plays a major role in the photoperiodic control of flowering time in long days by modulating phytochrome signals in flowering time control. Involved in the regulation of polar auxin transport in roots. Dephosphorylates directly the auxin efflux carriers PIN1 and PIN2, thus promoting their proper polar localization in root cell plasma membrane. Acts antagonistically with the protein kinase PID to regulate the reversible phosphorylation of PIN and polar targeting, subsequently impacting polar auxin transport and plant development. Involved in the regulation of abscisic acid (ABA) signaling during seed germination and postgermination seedling growth. Functions as a negative regulator of ABA signaling through direct dephosphorylation and destabilization of ABI5. Acts antagonistically with the protein kinase SRK2E/SNRK2.6 to regulate ABI5 phosphorylation and ABA responses. Involved in the regulation of phosphorylation status in hypocotyl phototropism. Involved in the negative regulation of photomorphogenesis by controlling the stability and transcriptional activity of PIF3 and PIF4 proteins in the dark, via the regulation of their phosphorylation status. The polypeptide is Phytochrome-associated serine/threonine-protein phosphatase 1 (Arabidopsis thaliana (Mouse-ear cress)).